The primary structure comprises 431 residues: Adenylosuccinate synthetase (431 aa).

Residues 12–18 (GDEGKGK) and 40–42 (GHT) each bind GTP. The active-site Proton acceptor is the Asp13. Residues Asp13 and Gly40 each contribute to the Mg(2+) site. IMP is bound by residues 13–16 (DEGK), 38–41 (NAGH), Thr128, Arg142, Gln223, Thr238, and Arg301. Catalysis depends on His41, which acts as the Proton donor. Position 297 to 303 (297 to 303 (TVTGRPR)) interacts with substrate. Residues Arg303, 329 to 331 (SID), and 411 to 413 (SVG) contribute to the GTP site.

It belongs to the adenylosuccinate synthetase family. In terms of assembly, homodimer. Mg(2+) serves as cofactor.

Its subcellular location is the cytoplasm. It catalyses the reaction IMP + L-aspartate + GTP = N(6)-(1,2-dicarboxyethyl)-AMP + GDP + phosphate + 2 H(+). Its pathway is purine metabolism; AMP biosynthesis via de novo pathway; AMP from IMP: step 1/2. Its function is as follows. Plays an important role in the de novo pathway of purine nucleotide biosynthesis. Catalyzes the first committed step in the biosynthesis of AMP from IMP. In Lacticaseibacillus paracasei (strain ATCC 334 / BCRC 17002 / CCUG 31169 / CIP 107868 / KCTC 3260 / NRRL B-441) (Lactobacillus paracasei), this protein is Adenylosuccinate synthetase.